A 92-amino-acid chain; its full sequence is PqqA binding protein (92 aa).

The protein belongs to the PqqD family. As to quaternary structure, monomer. Interacts with PqqE.

It functions in the pathway cofactor biosynthesis; pyrroloquinoline quinone biosynthesis. Its function is as follows. Functions as a PqqA binding protein and presents PqqA to PqqE, in the pyrroloquinoline quinone (PQQ) biosynthetic pathway. The sequence is that of PqqA binding protein from Azotobacter vinelandii (strain DJ / ATCC BAA-1303).